A 79-amino-acid chain; its full sequence is Small ribosomal subunit protein bS18 (79 aa).

The protein belongs to the bacterial ribosomal protein bS18 family. Part of the 30S ribosomal subunit. Forms a tight heterodimer with protein bS6.

Binds as a heterodimer with protein bS6 to the central domain of the 16S rRNA, where it helps stabilize the platform of the 30S subunit. This chain is Small ribosomal subunit protein bS18, found in Nitrobacter hamburgensis (strain DSM 10229 / NCIMB 13809 / X14).